The chain runs to 267 residues: 4-hydroxy-tetrahydrodipicolinate reductase (267 aa).

Residues 12 to 17 (GPRGRM), 100 to 102 (GTT), and 126 to 129 (APNF) contribute to the NAD(+) site. The active-site Proton donor/acceptor is the His-156. His-157 is a (S)-2,3,4,5-tetrahydrodipicolinate binding site. The active-site Proton donor is Lys-160. Residue 166–167 (GT) coordinates (S)-2,3,4,5-tetrahydrodipicolinate.

The protein belongs to the DapB family.

It is found in the cytoplasm. It carries out the reaction (S)-2,3,4,5-tetrahydrodipicolinate + NAD(+) + H2O = (2S,4S)-4-hydroxy-2,3,4,5-tetrahydrodipicolinate + NADH + H(+). The catalysed reaction is (S)-2,3,4,5-tetrahydrodipicolinate + NADP(+) + H2O = (2S,4S)-4-hydroxy-2,3,4,5-tetrahydrodipicolinate + NADPH + H(+). It participates in amino-acid biosynthesis; L-lysine biosynthesis via DAP pathway; (S)-tetrahydrodipicolinate from L-aspartate: step 4/4. Its function is as follows. Catalyzes the conversion of 4-hydroxy-tetrahydrodipicolinate (HTPA) to tetrahydrodipicolinate. The sequence is that of 4-hydroxy-tetrahydrodipicolinate reductase from Bacillus licheniformis (strain ATCC 14580 / DSM 13 / JCM 2505 / CCUG 7422 / NBRC 12200 / NCIMB 9375 / NCTC 10341 / NRRL NRS-1264 / Gibson 46).